Here is a 151-residue protein sequence, read N- to C-terminus: Inactive oocyte-specific homeobox protein 2 (151 aa).

The interval 1-97 (MAEGPSLHPK…PMASRKFRKE (97 aa)) is disordered. Residues 37–54 (MRQSPLVTPGSTTKSSLS) are compositionally biased toward polar residues.

This sequence belongs to the paired homeobox family. Obox subfamily. As to expression, specifically expressed in oocytes and early embryos.

Its function is as follows. In contrast to other Obox family proteins, displays a truncated homeobox domain and does not bind DNA. This chain is Inactive oocyte-specific homeobox protein 2, found in Mus musculus (Mouse).